The primary structure comprises 267 residues: L-aspartate dehydrogenase (267 aa).

NAD(+) contacts are provided by Ala-124 and Asn-190. Residue His-218 is part of the active site.

The protein belongs to the L-aspartate dehydrogenase family.

It carries out the reaction L-aspartate + NADP(+) + H2O = oxaloacetate + NH4(+) + NADPH + H(+). The enzyme catalyses L-aspartate + NAD(+) + H2O = oxaloacetate + NH4(+) + NADH + H(+). The protein operates within cofactor biosynthesis; NAD(+) biosynthesis; iminoaspartate from L-aspartate (dehydrogenase route): step 1/1. Its function is as follows. Specifically catalyzes the NAD or NADP-dependent dehydrogenation of L-aspartate to iminoaspartate. This Methanocaldococcus jannaschii (strain ATCC 43067 / DSM 2661 / JAL-1 / JCM 10045 / NBRC 100440) (Methanococcus jannaschii) protein is L-aspartate dehydrogenase.